The chain runs to 83 residues: Putative membrane protein insertion efficiency factor (83 aa).

Residues K62–K83 form a disordered region.

The protein belongs to the UPF0161 family.

It is found in the cell inner membrane. Could be involved in insertion of integral membrane proteins into the membrane. This chain is Putative membrane protein insertion efficiency factor, found in Chlorobaculum tepidum (strain ATCC 49652 / DSM 12025 / NBRC 103806 / TLS) (Chlorobium tepidum).